The chain runs to 595 residues: Aspartate--tRNA(Asp/Asn) ligase (595 aa).

An L-aspartate-binding site is contributed by E174. The aspartate stretch occupies residues 198–201 (QLFK). R220 is a binding site for L-aspartate. ATP-binding positions include 220–222 (RDE) and Q229. H456 contributes to the L-aspartate binding site. ATP is bound at residue E486. R493 lines the L-aspartate pocket. 538–541 (GFDR) is an ATP binding site.

It belongs to the class-II aminoacyl-tRNA synthetase family. Type 1 subfamily. Homodimer.

It is found in the cytoplasm. The catalysed reaction is tRNA(Asx) + L-aspartate + ATP = L-aspartyl-tRNA(Asx) + AMP + diphosphate. Functionally, aspartyl-tRNA synthetase with relaxed tRNA specificity since it is able to aspartylate not only its cognate tRNA(Asp) but also tRNA(Asn). Reaction proceeds in two steps: L-aspartate is first activated by ATP to form Asp-AMP and then transferred to the acceptor end of tRNA(Asp/Asn). The sequence is that of Aspartate--tRNA(Asp/Asn) ligase from Gloeobacter violaceus (strain ATCC 29082 / PCC 7421).